The primary structure comprises 101 residues: Therostasin (101 aa).

Positions 1-19 (MRGLAVLLLVACFCSVAFG) are cleaved as a signal peptide. Antistasin-like domains follow at residues 21–46 (CENTECPRACPGEYEFDEDGCNTCLC) and 49–75 (CNDAQCRIYCPLGFTTDANGCESFCTC).

As to expression, salivary glands.

It localises to the secreted. Functionally, potent inhibitor of factor Xa. It also inhibits trypsin in a weaker manner. The chain is Therostasin from Theromyzon tessulatum (Duck leech).